A 252-amino-acid polypeptide reads, in one-letter code: Probable transcriptional regulator SauR (252 aa).

One can recognise an HTH iclR-type domain in the interval asparagine 6 to serine 68. A DNA-binding region (H-T-H motif) is located at residues leucine 28–lysine 47. Residues proline 83 to glutamate 252 form the IclR-ED domain.

Its function is as follows. May regulate transcription of the sauSTU operon. This is Probable transcriptional regulator SauR (sauR) from Cupriavidus necator (strain ATCC 17699 / DSM 428 / KCTC 22496 / NCIMB 10442 / H16 / Stanier 337) (Ralstonia eutropha).